Consider the following 1414-residue polypeptide: DNA-directed RNA polymerase subunit beta' (1414 aa).

Positions 70, 72, 85, and 88 each coordinate Zn(2+). Mg(2+) is bound by residues Asp460, Asp462, and Asp464. Residues Cys815, Cys889, Cys896, and Cys899 each contribute to the Zn(2+) site. Residues Glu1395–Ser1414 are disordered.

Belongs to the RNA polymerase beta' chain family. The RNAP catalytic core consists of 2 alpha, 1 beta, 1 beta' and 1 omega subunit. When a sigma factor is associated with the core the holoenzyme is formed, which can initiate transcription. It depends on Mg(2+) as a cofactor. Zn(2+) is required as a cofactor.

The enzyme catalyses RNA(n) + a ribonucleoside 5'-triphosphate = RNA(n+1) + diphosphate. DNA-dependent RNA polymerase catalyzes the transcription of DNA into RNA using the four ribonucleoside triphosphates as substrates. The polypeptide is DNA-directed RNA polymerase subunit beta' (Herminiimonas arsenicoxydans).